The sequence spans 172 residues: Ribosome maturation factor RimM (172 aa).

Residues 95-168 (AEGEFYYHQI…RVDVEIMEGL (74 aa)) form the PRC barrel domain.

The protein belongs to the RimM family. Binds ribosomal protein uS19.

The protein localises to the cytoplasm. Functionally, an accessory protein needed during the final step in the assembly of 30S ribosomal subunit, possibly for assembly of the head region. Essential for efficient processing of 16S rRNA. May be needed both before and after RbfA during the maturation of 16S rRNA. It has affinity for free ribosomal 30S subunits but not for 70S ribosomes. The sequence is that of Ribosome maturation factor RimM from Streptococcus equi subsp. zooepidemicus (strain MGCS10565).